The primary structure comprises 277 residues: Alpha carbonic anhydrase 5 (277 aa).

The N-terminal stretch at 1–22 is a signal peptide; the sequence is MKIPSIGYVFFLIFISITIVSS. The 237-residue stretch at 33–269 folds into the Alpha-carbonic anhydrase domain; the sequence is TQFNYEKKGE…KNERPVALYI (237 aa). A disulfide bridge connects residues C58 and C219. N91 carries an N-linked (GlcNAc...) asparagine glycan. The Proton acceptor role is filled by H99. The N-linked (GlcNAc...) asparagine glycan is linked to N117. Positions 127, 129, and 146 each coordinate Zn(2+). 215 to 216 lines the substrate pocket; that stretch reads TT.

It belongs to the alpha-class carbonic anhydrase family. Requires Zn(2+) as cofactor. Post-translationally, N-glycosylated.

The protein localises to the plastid. The protein resides in the chloroplast stroma. The catalysed reaction is hydrogencarbonate + H(+) = CO2 + H2O. Reversible hydration of carbon dioxide. This Arabidopsis thaliana (Mouse-ear cress) protein is Alpha carbonic anhydrase 5 (ACA5).